Reading from the N-terminus, the 687-residue chain is Adhesion G-protein coupled receptor G1 (687 aa).

The signal sequence occupies residues 1–25; sequence MAVQVLRQMVYFLLSLFSLVQGAHS. 26-33 provides a ligand contact to heparin; it reads GSPREDFR. Topologically, residues 26-402 are extracellular; it reads GSPREDFRFC…TEVEATHKHY (377 aa). 2 disulfides stabilise this stretch: Cys35/Cys91 and Cys121/Cys177. N-linked (GlcNAc...) asparagine glycans are attached at residues Asn39, Asn148, and Asn171. 190 to 200 contributes to the heparin binding site; the sequence is LQHPQKAAKRP. Residues 224 to 395 enclose the GAIN-B domain; sequence DTLSFEEDRV…AVLMVSSTEV (172 aa). Residues Asn234, Asn303, Asn324, and Asn341 are each glycosylated (N-linked (GlcNAc...) asparagine). 2 cysteine pairs are disulfide-bonded: Cys346–Cys377 and Cys366–Cys379. The tract at residues 346-395 is GPS; it reads CVFWVEDPASSSTGSWSSAGCETVSRDTQTSCLCNHLTYFAVLMVSSTEV. The stachel stretch occupies residues 384–397; it reads YFAVLMVSSTEVEA. The helical transmembrane segment at 403 to 423 threads the bilayer; that stretch reads LTLLSYVGCVISALACVFTIA. The Cytoplasmic segment spans residues 424–442; it reads AYLCSRRKSRDYTIKVHMN. Residues 443–463 traverse the membrane as a helical segment; the sequence is LLSAVFLLDVSFLLSEPVALT. The Extracellular segment spans residues 464–471; it reads GSEAACRT. Residues 472–492 traverse the membrane as a helical segment; sequence SAMFLHFSLLACLSWMGLEGY. The Cytoplasmic portion of the chain corresponds to 493 to 512; that stretch reads NLYRLVVEVFGTYVPGYLLK. Residues 513-533 form a helical membrane-spanning segment; the sequence is LSIVGWGFPVFLVTLVALVDV. At 534-570 the chain is on the extracellular side; the sequence is NNYGPIILAVRRTPERVTYPSMCWIRDSLVSYVTNLG. Residues 571-591 traverse the membrane as a helical segment; the sequence is LFSLVFLFNLAMLATMVVQIL. Over 592 to 603 the chain is Cytoplasmic; the sequence is RLRPHSQNWPHV. The helical transmembrane segment at 604 to 624 threads the bilayer; that stretch reads LTLLGLSLVLGLPWALVFFSF. Topologically, residues 625–630 are extracellular; sequence ASGTFQ. The chain crosses the membrane as a helical span at residues 631–651; it reads LVILYLFSIITSFQGFLIFLW. Over 652 to 687 the chain is Cytoplasmic; it reads YWSMRFQAQGGPSPLKNNSDSAKLPISSGSTSSSRI. The segment at 664 to 687 is disordered; the sequence is SPLKNNSDSAKLPISSGSTSSSRI. Residues 678 to 687 show a composition bias toward low complexity; it reads SSGSTSSSRI.

This sequence belongs to the G-protein coupled receptor 2 family. LN-TM7 subfamily. In terms of assembly, heterodimer of 2 chains generated by proteolytic processing; the large extracellular N-terminal fragment (ADGRG1 NT) and the membrane-bound C-terminal fragment (ADGRG1-CT) predominantly remain associated and non-covalently linked. ADGRG1 NT self-associates in a trans-trans manner; the homophilic interaction enhances receptor signaling. Interacts with TGM2. Interacts with heparin; leading to the reduction of ADGRG1 shedding. Interacts with COL3A1. Part of a GPCR-tetraspanin complex at least consisting of ADGRG1, CD81, eventually CD9, and GNA11 in which CD81 is enhancing the association of ADGRG1 with GNA11. Post-translationally, autoproteolytically cleaved into 2 fragments; the large extracellular N-terminal fragment and the membroune-bound C-terminal fragment predominantly remain associated and non-covalently linked. In terms of processing, N-glycosylated. The secreted ADGRG1 N-terminal fragment is heavily glycosylated. Ubiquitinated. Undergoes polyubiquitination upon activation. As to expression, expressed in neural progenitor cells in fetal forbrain. Expressed in migrating neurons. Expressed in radial glial endfeet (at protein level). Expressed in peritubular myoid cells, Sertoli cells, and germ cells of the testis.

The protein localises to the cell membrane. It localises to the secreted. The protein resides in the membrane raft. Its activity is regulated as follows. Forms a heterodimer of 2 chains generated by proteolytic processing that remain associated through non-covalent interactions mediated by the GAIN-B domain. In the inactivated receptor, the Stachel sequence (also named stalk) is embedded in the GAIN-B domain, where it adopts a beta-strand conformation. On activation, the Stachel moves into the 7 transmembrane region and adopts a twisted hook-shaped configuration that forms contacts within the receptor, leading to coupling of a G-alpha protein, which activates signaling. The cleaved GAIN-B and N-terminal domains can then dissociate from the rest of the receptor. Activated by the small-molecule agonist, 3-alpha-acetoxydihydrodeoxygedunin (3-alpha-DOG). Adhesion G-protein coupled receptor (aGPCR) for steroid hormone 17alpha-hydroxypregnenolone (17-OH), which is involved in cell adhesion and cell-cell interactions. Ligand binding causes a conformation change that triggers signaling via guanine nucleotide-binding proteins (G proteins) and modulates the activity of downstream effectors, such as RhoA pathway. ADGRG1 is coupled to G(12) and/or G(13) G proteins (GNA12 and GNA13, respectively) and mediates the activation Rho small GTPases. Acts as a potent suppressor of ferroptosis: binding to 17-OH-binding initiates signaling that down-regulates CD36 and alleviates ferroptosis-induced liver injury. Ligand-binding also induces cell adhesion activity via association with proteins such as collagen III/COL3A1 and TGM2. Mediates cell matrix adhesion in developing neurons and hematopoietic stem cells. Involved in cortical development, specifically in maintenance of the pial basement membrane integrity and in cortical lamination: association with COL3A1 in the developing brain inhibits neuronal migration via activation of the RhoA pathway. Together with TGM2, acts as a regulator of myelination and myelin repair in oligodendrocyte precursor cells. Acts as a hemostatic sensor of shear force: G protein-coupled receptor signaling is activated in response to shear force in platelets, promoting G(13) G protein signaling, and platelet shape change and aggregation in a COL3A1-dependent manner. Acts as an inhibitor of VEGFA production thereby inhibiting angiogenesis through a signaling pathway mediated by PRKCA. Plays a role in the maintenance of hematopoietic stem cells in bone marrow niche. Plays an essential role in testis development. Its function is as follows. Adhesion G-protein coupled receptor (aGPCR) for phosphatidylserine, which is involved in microglia-mediated synapse pruning during development. Required to maintain appropriate synaptic numbers in several brain regions in a time- and circuit-dependent fashion: phosphatidylserine-binding acts as a 'eat-me' signal for apoptotic cells, leading to microglial engulfment of phosphatidylserine-positive synapses. The sequence is that of Adhesion G-protein coupled receptor G1 from Mus musculus (Mouse).